The sequence spans 320 residues: Retron Ec86 reverse transcriptase (320 aa).

The region spanning 34-248 (VETLRLLIYT…SQRKVTGLVI (215 aa)) is the Reverse transcriptase domain. Positions 119, 197, and 198 each coordinate Mg(2+). The segment at 230–320 (KKTCISGPRS…GKNPLNKAKT (91 aa)) is necessary and required for recognition and binding of RNA.

This sequence belongs to the bacterial reverse transcriptase family.

It carries out the reaction DNA(n) + a 2'-deoxyribonucleoside 5'-triphosphate = DNA(n+1) + diphosphate. In terms of biological role, reverse transcriptase (RT) component of antiviral defense system retron Ec86, composed of a non-coding RNA (ncRNA), a ribosyltransferase/DNA-binding protein and this RT. Expression of the 3-gene retron confers protection against bacteriophage T5. At multiplicity of infection (MOI) of 0.02 cultures grow normally when infected with T5 without collapsing, at MOI 2 cultures enter growth stasis. Responsible for synthesis of msDNA (a branched molecule with RNA linked by a 2',5'-phosphodiester bond to ssDNA). The retron transcript serves as primer (from a conserved internal G residue) and template for the reaction, and codes for the RT. Recognizes only its cognate RNA as a primer template. Overexpression of the ncRNA and RT (without the ribosyltransferase), which leads to increased levels of msDNA, is mutagenic in vivo. This may be due to a mismatch in the msDNA stem which binds and sequesters MutS and/or MutL. The sequence is that of Retron Ec86 reverse transcriptase from Escherichia coli.